The following is a 319-amino-acid chain: tRNA uridine(34) hydroxylase (319 aa).

Positions 127–221 (KQEDTVIIDA…YGKDPEVQGE (95 aa)) constitute a Rhodanese domain. The active-site Cysteine persulfide intermediate is Cys181.

It belongs to the TrhO family.

It catalyses the reaction uridine(34) in tRNA + AH2 + O2 = 5-hydroxyuridine(34) in tRNA + A + H2O. In terms of biological role, catalyzes oxygen-dependent 5-hydroxyuridine (ho5U) modification at position 34 in tRNAs. The sequence is that of tRNA uridine(34) hydroxylase from Bacillus cereus (strain Q1).